A 484-amino-acid polypeptide reads, in one-letter code: Protein DETOXIFICATION 33 (484 aa).

Positions 1-16 are enriched in basic and acidic residues; it reads MGKDKTLPLLDPREPP. The segment at 1–22 is disordered; it reads MGKDKTLPLLDPREPPELTGTK. A run of 12 helical transmembrane segments spans residues 39–59, 81–101, 122–142, 155–175, 190–210, 218–238, 267–287, 294–314, 338–358, 380–400, 409–429, and 439–459; these read LWEL…LGAL, VISG…ETLC, VILF…PPIL, AGKF…NFPI, WISG…ILYF, AITL…YILI, ALML…TGLL, VDAI…SIGF, VIVV…VVLA, IAVL…LSGV, LVAY…GLVL, and GIWG…IGII.

It belongs to the multi antimicrobial extrusion (MATE) (TC 2.A.66.1) family.

It localises to the membrane. The protein is Protein DETOXIFICATION 33 of Arabidopsis thaliana (Mouse-ear cress).